A 966-amino-acid chain; its full sequence is Protein STICHEL-like 4 (966 aa).

Disordered stretches follow at residues 64–118 (RSLR…DRSS) and 200–237 (RDNA…REQN). Residues 75-84 (LKEDHQDSRE) are compositionally biased toward basic and acidic residues. A compositionally biased stretch (polar residues) spans 98–108 (PIVSFGTSKVT). The segment covering 109-118 (PSDEKFDRSS) has biased composition (basic and acidic residues). Over residues 208–217 (SEMSIASNSV) the composition is skewed to polar residues. The span at 219–236 (RGEKYEGEEGGGGRDREQ) shows a compositional bias: basic and acidic residues. 384–391 (GPNGTGKT) is a binding site for ATP. Zn(2+) is bound by residues cysteine 403, cysteine 412, cysteine 415, and cysteine 418. Positions 650–678 (SKEDMEKLKQALKTLSESEKQLRVSNDKL) form a coiled coil. A compositionally biased stretch (polar residues) spans 706–717 (FNHTPLTDSDPS). A disordered region spans residues 706 to 733 (FNHTPLTDSDPSNHVVAGTRRDDSKQGF).

This sequence belongs to the DnaX/STICHEL family.

This chain is Protein STICHEL-like 4, found in Arabidopsis thaliana (Mouse-ear cress).